The chain runs to 160 residues: Large ribosomal subunit protein eL21 (160 aa).

2 stretches are compositionally biased toward basic and acidic residues: residues 112-123 (NDQKKKEAKEKG) and 136-145 (REAHFVRTNG). Positions 112–145 (NDQKKKEAKEKGTWVQLKRQPAPPREAHFVRTNG) are disordered.

It belongs to the eukaryotic ribosomal protein eL21 family. Component of the large ribosomal subunit.

It is found in the cytoplasm. The protein localises to the cytosol. The protein resides in the endoplasmic reticulum. In terms of biological role, component of the large ribosomal subunit. The ribosome is a large ribonucleoprotein complex responsible for the synthesis of proteins in the cell. This Capra hircus (Goat) protein is Large ribosomal subunit protein eL21 (RPL21).